Reading from the N-terminus, the 179-residue chain is Transcription factor NF-E4 (179 aa).

Lysine 43 carries the N6-acetyllysine modification. The tract at residues 100–179 is disordered; the sequence is AMKATGPHNA…QLPSLHLSQG (80 aa). 2 stretches are compositionally biased toward polar residues: residues 143-153 and 163-179; these read LSQSNPPTRIS and ALEQ…LSQG.

As to quaternary structure, component of the SSP (stage selector protein) complex, which appears to be a heteromer of TFCP2 and 2 copies of NFE4. Interacts with HDAC1 and PCAF. Isoform 2 interacts with TFCP2. In terms of processing, acetylation at Lys-43 prolongs the protein half-life by preventing ubiquitin-mediated degradation and reduces the interaction between NF-E4 and HDAC1, potentially maximizing the activating ability of the factor at the gamma-promoter. Ubiquitinated; leading to its degradation by the proteasome. Acetylation at Lys-43 prevents ubiquitination. As to expression, specifically expressed in fetal liver, cord blood and bone marrow. Also expressed in the K562 and HEL cell lines, which constitutively express the fetal globin genes.

Its subcellular location is the nucleus. Functions as part of the SSP (stage selector protein) complex, a complex that contributes to the preferential expression of the gamma-gene in fetal erythroid cells by facilitating the interaction of the gamma-globin genes with enhancer elements contained in the locus control region (LCR). The complex binds to the stage selector element (SSE) in the proximal gamma-globin promoter. In contrast, isoform 2 acts as a repressor of gamma-globin gene expression by preventing NFE2 and RNA polymerase II recruitment to the promoter. This chain is Transcription factor NF-E4 (NFE4), found in Homo sapiens (Human).